The sequence spans 152 residues: Ribosome maturation factor RimP (152 aa).

This sequence belongs to the RimP family.

The protein resides in the cytoplasm. Functionally, required for maturation of 30S ribosomal subunits. This Shigella boydii serotype 4 (strain Sb227) protein is Ribosome maturation factor RimP.